Reading from the N-terminus, the 36-residue chain is Glycine-rich protein GWK (36 aa).

The tract at residues 1–36 is disordered; that stretch reads YKRGGGGWGGGGGWKGGGGGGGGWKGGGGGGKGGGG.

Possesses antifungal activity against a number of phytopathogenic fungi, including H.sativum and F.culmorum. This is Glycine-rich protein GWK from Cucumis melo (Muskmelon).